The sequence spans 1262 residues: Collagen alpha-1(III) chain (1262 aa).

Residues 1–23 (MMSFVQKVSLFILAVFQPSVILA) form the signal peptide. A propeptide spans 24–150 (QQDALGGCTH…PSISGGSFSP (127 aa)) (N-terminal propeptide). The VWFC domain occupies 29–88 (GGCTHLGQEYADRDVWKPEPCQICVCDSGSVLCDDIICDDQELDCPNPEIPLGECCPVCP). 2 disordered regions span residues 95 to 143 (TELP…CPSI) and 160 to 1000 (GSVG…GGVA). The span at 102-118 (GPKGDPGSPGSPGRTGA) shows a compositional bias: low complexity. Residues 119–134 (PGPPGQPGSPGAPGPP) show a composition bias toward pro residues. The segment at 145–164 (GGSFSPQYDSYDVKAGSVGM) is nonhelical region (N-terminal). A triple-helical region region spans residues 165–994 (GYPPQPISGF…PGPSGPPGPC (830 aa)). Pro residues predominate over residues 167–190 (PPQPISGFPGPPGPSGPPGPPGHA). Positions 192–201 (PPGSNGYQGP) are enriched in low complexity. Residues 202-216 (PGEPGQPGPSGPPGP) are compositionally biased toward pro residues. The segment covering 228–240 (KDGEPGRPGRNGD) has biased composition (basic and acidic residues). Over residues 253-264 (PGMPGMPGMKGA) the composition is skewed to low complexity. Lys-262 is subject to 5-hydroxylysine. Residues 265–274 (RGFDGKDGAK) show a composition bias toward basic and acidic residues. Low complexity-rich tracts occupy residues 276 to 295 (DSGAPGPKGEAGQPGANGSP) and 339 to 376 (TAGFPGSPGFKGEAGPPGPAGASGNPGERGEPGPQGQA). Lys-283 is subject to 5-hydroxylysine. Residues 389 to 414 (GSPGGKGEMGPSGIPGGPGPPGGRGL) are compositionally biased toward gly residues. 2 stretches are compositionally biased toward low complexity: residues 534 to 549 (MRGLPGIPGSPGSDGK) and 631 to 640 (PGPSGSPGLQ). A compositionally biased stretch (gly residues) spans 641 to 650 (GLPGGPGPAG). Residues 672–684 (PKGENGIPGERGP) show a composition bias toward low complexity. The span at 692–701 (GARGGPGPAG) shows a compositional bias: gly residues. 4 stretches are compositionally biased toward low complexity: residues 723–738 (LQGMPGERGASGSPGP), 781–790 (TGPAGAPGPA), 802–817 (QGLPGPAGFPGAPGQN), and 828–838 (PPGLRGEAGPP). Lys-859 carries the post-translational modification 5-hydroxylysine. A compositionally biased stretch (gly residues) spans 863–872 (GSPGGPGAAG). The segment covering 895 to 904 (PGVPGPPGHP) has biased composition (pro residues). Low complexity predominate over residues 927 to 940 (PQGAIGSPGASGAR). Residues 976-993 (AGPPGQPGLPGPSGPPGP) show a composition bias toward pro residues. The interval 995–1003 (CGGGVASLG) is nonhelical region (C-terminal). A propeptide spans 1018–1262 (DEPKENEINL…GVDVGPVCFL (245 aa)) (C-terminal propeptide). The Fibrillar collagen NC1 domain occupies 1028–1262 (GEIMSSMKSI…GVDVGPVCFL (235 aa)). 3 cysteine pairs are disulfide-bonded: Cys-1058–Cys-1090, Cys-1098–Cys-1260, and Cys-1168–Cys-1213. Residues Asp-1076, Asn-1078, Gln-1079, Cys-1081, and Asp-1084 each coordinate Ca(2+). Residue Asn-1163 is glycosylated (N-linked (GlcNAc...) asparagine).

Belongs to the fibrillar collagen family. As to quaternary structure, trimers of identical alpha 1(III) chains. The chains are linked to each other by interchain disulfide bonds. Trimers are also cross-linked via hydroxylysines. Post-translationally, prolines at the third position of the tripeptide repeating unit (G-X-Y) are hydroxylated in some or all of the chains.

The protein localises to the secreted. The protein resides in the extracellular space. Its subcellular location is the extracellular matrix. Functionally, collagen type III occurs in most soft connective tissues along with type I collagen. The protein is Collagen alpha-1(III) chain (COL3A1) of Gallus gallus (Chicken).